The sequence spans 204 residues: Leucyl/phenylalanyl-tRNA--protein transferase (204 aa).

This sequence belongs to the L/F-transferase family.

The protein localises to the cytoplasm. The catalysed reaction is N-terminal L-lysyl-[protein] + L-leucyl-tRNA(Leu) = N-terminal L-leucyl-L-lysyl-[protein] + tRNA(Leu) + H(+). The enzyme catalyses N-terminal L-arginyl-[protein] + L-leucyl-tRNA(Leu) = N-terminal L-leucyl-L-arginyl-[protein] + tRNA(Leu) + H(+). It catalyses the reaction L-phenylalanyl-tRNA(Phe) + an N-terminal L-alpha-aminoacyl-[protein] = an N-terminal L-phenylalanyl-L-alpha-aminoacyl-[protein] + tRNA(Phe). In terms of biological role, functions in the N-end rule pathway of protein degradation where it conjugates Leu, Phe and, less efficiently, Met from aminoacyl-tRNAs to the N-termini of proteins containing an N-terminal arginine or lysine. The sequence is that of Leucyl/phenylalanyl-tRNA--protein transferase from Sinorhizobium medicae (strain WSM419) (Ensifer medicae).